An 858-amino-acid polypeptide reads, in one-letter code: DNA mismatch repair protein MutS (858 aa).

600–607 serves as a coordination point for ATP; the sequence is GPNMSGKS.

Belongs to the DNA mismatch repair MutS family.

Functionally, this protein is involved in the repair of mismatches in DNA. It is possible that it carries out the mismatch recognition step. This protein has a weak ATPase activity. The sequence is that of DNA mismatch repair protein MutS from Bacillus pumilus (strain SAFR-032).